The following is a 483-amino-acid chain: UDP-N-acetylmuramoyl-L-alanyl-D-glutamate--2,6-diaminopimelate ligase (483 aa).

Position 29 (S29) interacts with UDP-N-acetyl-alpha-D-muramoyl-L-alanyl-D-glutamate. 107 to 113 lines the ATP pocket; the sequence is GTSGKTS. Residues 149 to 150, S176, Q182, and R184 contribute to the UDP-N-acetyl-alpha-D-muramoyl-L-alanyl-D-glutamate site; that span reads TT. The residue at position 216 (K216) is an N6-carboxylysine. Residues R380, 404–407, G452, and E456 each bind meso-2,6-diaminopimelate; that span reads DNPR. Residues 404 to 407 carry the Meso-diaminopimelate recognition motif motif; sequence DNPR.

The protein belongs to the MurCDEF family. MurE subfamily. Requires Mg(2+) as cofactor. Carboxylation is probably crucial for Mg(2+) binding and, consequently, for the gamma-phosphate positioning of ATP.

It is found in the cytoplasm. The enzyme catalyses UDP-N-acetyl-alpha-D-muramoyl-L-alanyl-D-glutamate + meso-2,6-diaminopimelate + ATP = UDP-N-acetyl-alpha-D-muramoyl-L-alanyl-gamma-D-glutamyl-meso-2,6-diaminopimelate + ADP + phosphate + H(+). Its pathway is cell wall biogenesis; peptidoglycan biosynthesis. Functionally, catalyzes the addition of meso-diaminopimelic acid to the nucleotide precursor UDP-N-acetylmuramoyl-L-alanyl-D-glutamate (UMAG) in the biosynthesis of bacterial cell-wall peptidoglycan. This chain is UDP-N-acetylmuramoyl-L-alanyl-D-glutamate--2,6-diaminopimelate ligase, found in Chelativorans sp. (strain BNC1).